The sequence spans 234 residues: Sugar fermentation stimulation protein A (234 aa).

The segment at residues 201–220 is a DNA-binding region (H-T-H motif); it reads LLSEAQQRGVEILAYKAEIS.

This sequence belongs to the SfsA family.

Binds to DNA non-specifically. Could be a regulatory factor involved in maltose metabolism. The sequence is that of Sugar fermentation stimulation protein A from Shigella flexneri.